Reading from the N-terminus, the 101-residue chain is Small ribosomal subunit protein uS14 (101 aa).

The protein belongs to the universal ribosomal protein uS14 family. As to quaternary structure, part of the 30S ribosomal subunit. Contacts proteins S3 and S10.

Its function is as follows. Binds 16S rRNA, required for the assembly of 30S particles and may also be responsible for determining the conformation of the 16S rRNA at the A site. This Actinobacillus pleuropneumoniae serotype 5b (strain L20) protein is Small ribosomal subunit protein uS14.